The following is a 435-amino-acid chain: 4-hydroxy-3-methylbut-2-en-1-yl diphosphate synthase (flavodoxin) (435 aa).

Residues 1–15 (MTDVDLRARPQEGMK) are compositionally biased toward basic and acidic residues. Positions 1 to 24 (MTDVDLRARPQEGMKEIPAGPKGR) are disordered. Positions 316, 319, 362, and 369 each coordinate [4Fe-4S] cluster.

Belongs to the IspG family. Requires [4Fe-4S] cluster as cofactor.

The enzyme catalyses (2E)-4-hydroxy-3-methylbut-2-enyl diphosphate + oxidized [flavodoxin] + H2O + 2 H(+) = 2-C-methyl-D-erythritol 2,4-cyclic diphosphate + reduced [flavodoxin]. Its pathway is isoprenoid biosynthesis; isopentenyl diphosphate biosynthesis via DXP pathway; isopentenyl diphosphate from 1-deoxy-D-xylulose 5-phosphate: step 5/6. In terms of biological role, converts 2C-methyl-D-erythritol 2,4-cyclodiphosphate (ME-2,4cPP) into 1-hydroxy-2-methyl-2-(E)-butenyl 4-diphosphate. This is 4-hydroxy-3-methylbut-2-en-1-yl diphosphate synthase (flavodoxin) from Afipia carboxidovorans (strain ATCC 49405 / DSM 1227 / KCTC 32145 / OM5) (Oligotropha carboxidovorans).